We begin with the raw amino-acid sequence, 304 residues long: Homoserine kinase (304 aa).

90–100 (PLARGLGSSAS) contributes to the ATP binding site.

Belongs to the GHMP kinase family. Homoserine kinase subfamily.

The protein resides in the cytoplasm. It carries out the reaction L-homoserine + ATP = O-phospho-L-homoserine + ADP + H(+). It functions in the pathway amino-acid biosynthesis; L-threonine biosynthesis; L-threonine from L-aspartate: step 4/5. Catalyzes the ATP-dependent phosphorylation of L-homoserine to L-homoserine phosphate. In Staphylococcus aureus (strain NCTC 8325 / PS 47), this protein is Homoserine kinase.